Consider the following 362-residue polypeptide: Peptide chain release factor 1 (362 aa).

Position 236 is an N5-methylglutamine (glutamine 236).

Belongs to the prokaryotic/mitochondrial release factor family. In terms of processing, methylated by PrmC. Methylation increases the termination efficiency of RF1.

It is found in the cytoplasm. Peptide chain release factor 1 directs the termination of translation in response to the peptide chain termination codons UAG and UAA. This Lactobacillus helveticus (strain DPC 4571) protein is Peptide chain release factor 1.